A 155-amino-acid chain; its full sequence is Transcriptional repressor NrdR (155 aa).

A zinc finger spans residues cysteine 3–cysteine 34. The ATP-cone domain occupies leucine 49–aspartate 139.

Belongs to the NrdR family. Requires Zn(2+) as cofactor.

In terms of biological role, negatively regulates transcription of bacterial ribonucleotide reductase nrd genes and operons by binding to NrdR-boxes. In Ruegeria sp. (strain TM1040) (Silicibacter sp.), this protein is Transcriptional repressor NrdR.